The chain runs to 358 residues: Snurportin-1 (358 aa).

The residue at position 1 (Met1) is an N-acetylmethionine. 2 disordered regions span residues 1–26 (MEEL…APHP) and 69–90 (DWTG…MDID). The segment at 1 to 65 (MEELSQALAS…LDYVNHARRL (65 aa)) is necessary for interaction with KPNB1 and m3G-cap U1 and U5 snRNP import receptor activity. The necessary for interaction with XPO1 stretch occupies residues 1 to 160 (MEELSQALAS…NRFSSLLPGG (160 aa)). Positions 7-22 (ALASSFSVSQELNSTA) are enriched in polar residues. The 63-residue stretch at 11-73 (SFSVSQELNS…RLAEDDWTGM (63 aa)) folds into the IBB domain. Residue Ser75 is modified to Phosphoserine. Residues 128-130 (GKR) are interaction with m3G-cap structure. The segment at 210-329 (MHSKLPEEEG…DTKEKLTHKA (120 aa)) is necessary for binding to the m3G-cap structure. Residues 315 to 341 (KRSQEDTKEKLTHKASENGHYELEHLS) are compositionally biased toward basic and acidic residues. Residues 315-358 (KRSQEDTKEKLTHKASENGHYELEHLSTPKLRNPPHSSESLMDN) are disordered. A compositionally biased stretch (polar residues) spans 349-358 (PHSSESLMDN). Position 351 is a phosphoserine (Ser351).

It belongs to the snurportin family. Component of an import snRNP complex composed of KPNB1, SNUPN, SMN1 and ZNF259. Component of a nuclear export receptor complex composed of KPNB1, Ran, SNUPN and XPO1. Found in a trimeric export complex with SNUPN, Ran and XPO1. Interacts (via IBB domain) with KPNB1; the interaction is direct. Interacts with DDX20, IPO7, SMN1, SNRPB and XPO1. Interacts directly with XPO1. Its interaction with XPO1 and binding to m3G-cap U snRNPs appears to be mutually exclusive. Can form homomers.

The protein localises to the nucleus. It localises to the cytoplasm. Functions as an U snRNP-specific nuclear import adapter. Involved in the trimethylguanosine (m3G)-cap-dependent nuclear import of U snRNPs. Binds specifically to the terminal m3G-cap U snRNAs. In Mus musculus (Mouse), this protein is Snurportin-1 (Snupn).